The following is a 152-amino-acid chain: Methylglyoxal synthase (152 aa).

One can recognise an MGS-like domain in the interval 6–152 (RKISARKSIA…YDGYLAERLA (147 aa)). Residues His-19, Lys-23, 45–48 (TGTT), and 65–66 (SG) each bind substrate. Asp-71 serves as the catalytic Proton donor/acceptor. His-98 serves as a coordination point for substrate.

This sequence belongs to the methylglyoxal synthase family.

It carries out the reaction dihydroxyacetone phosphate = methylglyoxal + phosphate. In terms of biological role, catalyzes the formation of methylglyoxal from dihydroxyacetone phosphate. This is Methylglyoxal synthase from Actinobacillus pleuropneumoniae serotype 3 (strain JL03).